Consider the following 429-residue polypeptide: 4-hydroxy-3-methylbut-2-en-1-yl diphosphate synthase (flavodoxin) (429 aa).

[4Fe-4S] cluster contacts are provided by Cys310, Cys313, Cys356, and Glu363.

It belongs to the IspG family. [4Fe-4S] cluster serves as cofactor.

It carries out the reaction (2E)-4-hydroxy-3-methylbut-2-enyl diphosphate + oxidized [flavodoxin] + H2O + 2 H(+) = 2-C-methyl-D-erythritol 2,4-cyclic diphosphate + reduced [flavodoxin]. The protein operates within isoprenoid biosynthesis; isopentenyl diphosphate biosynthesis via DXP pathway; isopentenyl diphosphate from 1-deoxy-D-xylulose 5-phosphate: step 5/6. Its function is as follows. Converts 2C-methyl-D-erythritol 2,4-cyclodiphosphate (ME-2,4cPP) into 1-hydroxy-2-methyl-2-(E)-butenyl 4-diphosphate. This is 4-hydroxy-3-methylbut-2-en-1-yl diphosphate synthase (flavodoxin) from Bradyrhizobium sp. (strain BTAi1 / ATCC BAA-1182).